We begin with the raw amino-acid sequence, 369 residues long: Immunoglobulin superfamily member 5 (369 aa).

A signal peptide spans 1-24 (MEGSWRDVLAVLVILAQLTVSGSS). Ig-like V-type domains follow at residues 25-125 (YQII…LSVQ) and 128-217 (GTLN…LTVN). The Extracellular portion of the chain corresponds to 25 to 239 (YQIIEGPRNV…GEGQALPTWA (215 aa)). Residues Asn33 and Asn45 are each glycosylated (N-linked (GlcNAc...) asparagine). An intrachain disulfide couples Cys46 to Cys109. Asn146, Asn196, and Asn217 each carry an N-linked (GlcNAc...) asparagine glycan. Cys149 and Cys201 are joined by a disulfide. Residues 240-260 (IILLAVAFSLLLILIIALIII) traverse the membrane as a helical segment. Residues 261-369 (FCCCCVSRRE…PQKIRNVTIV (109 aa)) lie on the Cytoplasmic side of the membrane. The interval 321–354 (PKSGEVSLPEQRSSLPQQELDKHRPSPVTHPRVS) is disordered.

The protein belongs to the immunoglobulin superfamily. In terms of assembly, interacts with MAGI1 at tight junctions, forms a tripartite complex with NPHS1. Interacts with LNX1 isoform 2 via its PDZ 2 domain, it may also interact with other isoforms containing this domain. As to expression, in kidney, it is found in glomeruli and in the proximal tubules (at protein level).

The protein localises to the apical cell membrane. The protein resides in the cell junction. It localises to the tight junction. Provides, together with MAGI1, an adhesion machinery at tight junctions, which may regulate the permeability of kidney glomerulus and small intestinal epithelial cells. Mediates calcium-independent homophilic cell adhesion. In testis, it may function as a cell adhesion molecule rather than a tight-junction protein. It may participate in the adhesion between spermatogonia-spermatogonia, spermatogonia-Sertoli cells, and Sertoli cells-Sertoli cells. This is Immunoglobulin superfamily member 5 (Igsf5) from Rattus norvegicus (Rat).